A 641-amino-acid polypeptide reads, in one-letter code: DNA mismatch repair protein MutL (641 aa).

A disordered region spans residues 345-445 (PAAVAPPAPA…GDTSLGDTSP (101 aa)). Residues 419–429 (PRTEPATRTGE) show a composition bias toward basic and acidic residues. A compositionally biased stretch (polar residues) spans 432–442 (GISSGDTSLGD).

It belongs to the DNA mismatch repair MutL/HexB family.

In terms of biological role, this protein is involved in the repair of mismatches in DNA. It is required for dam-dependent methyl-directed DNA mismatch repair. May act as a 'molecular matchmaker', a protein that promotes the formation of a stable complex between two or more DNA-binding proteins in an ATP-dependent manner without itself being part of a final effector complex. In Azotobacter vinelandii (strain DJ / ATCC BAA-1303), this protein is DNA mismatch repair protein MutL.